The sequence spans 295 residues: 33 kDa chaperonin (295 aa).

Intrachain disulfides connect Cys-237-Cys-239 and Cys-270-Cys-273.

It belongs to the HSP33 family. In terms of processing, under oxidizing conditions two disulfide bonds are formed involving the reactive cysteines. Under reducing conditions zinc is bound to the reactive cysteines and the protein is inactive.

Its subcellular location is the cytoplasm. In terms of biological role, redox regulated molecular chaperone. Protects both thermally unfolding and oxidatively damaged proteins from irreversible aggregation. Plays an important role in the bacterial defense system toward oxidative stress. The chain is 33 kDa chaperonin from Lactiplantibacillus plantarum (strain ATCC BAA-793 / NCIMB 8826 / WCFS1) (Lactobacillus plantarum).